The following is a 362-amino-acid chain: Myricetin 3'-O-methyltransferase 4 (362 aa).

S-adenosyl-L-methionine is bound at residue D229. H267 (proton acceptor) is an active-site residue.

The protein belongs to the class I-like SAM-binding methyltransferase superfamily. Cation-independent O-methyltransferase family. In terms of assembly, homodimer. In terms of tissue distribution, mainly expressed in stem and petiole trichomes.

The enzyme catalyses myricetin + S-adenosyl-L-methionine = laricitrin + S-adenosyl-L-homocysteine + H(+). It participates in flavonoid metabolism. In terms of biological role, flavonoid 3'-O-methyltransferase involved in the biosynthesis of polymethoxylated flavonoids natural products such as myricetin derivatives, aroma compounds possessing antioxidant properties and exhibiting pharmacological activities such as anti-carcinogen, anti-viral, anti-thrombotic, anti-diabetic, anti-atherosclerotic, and anti-inflammatory effects. Catalyzes S-adenosylmethionine-dependent regioselective 3'-O-methylation of flavonoids; active on various hydroxylated flavonoid substrates, including myricetin, thus producing 3'-methyl myricetin (laricitrin). This Solanum lycopersicum (Tomato) protein is Myricetin 3'-O-methyltransferase 4.